A 455-amino-acid chain; its full sequence is Phosphomethylpyrimidine synthase (455 aa).

Substrate is bound by residues asparagine 80, methionine 109, tyrosine 139, histidine 175, 195–197, 236–239, and glutamate 275; these read SRG and DSLR. Histidine 279 contributes to the Zn(2+) binding site. Tyrosine 302 provides a ligand contact to substrate. Histidine 343 lines the Zn(2+) pocket. Residues cysteine 423, cysteine 426, and cysteine 431 each coordinate [4Fe-4S] cluster.

The protein belongs to the ThiC family. The cofactor is [4Fe-4S] cluster.

It carries out the reaction 5-amino-1-(5-phospho-beta-D-ribosyl)imidazole + S-adenosyl-L-methionine = 4-amino-2-methyl-5-(phosphooxymethyl)pyrimidine + CO + 5'-deoxyadenosine + formate + L-methionine + 3 H(+). The protein operates within cofactor biosynthesis; thiamine diphosphate biosynthesis. Its function is as follows. Catalyzes the synthesis of the hydroxymethylpyrimidine phosphate (HMP-P) moiety of thiamine from aminoimidazole ribotide (AIR) in a radical S-adenosyl-L-methionine (SAM)-dependent reaction. This chain is Phosphomethylpyrimidine synthase, found in Synechococcus sp. (strain JA-2-3B'a(2-13)) (Cyanobacteria bacterium Yellowstone B-Prime).